Consider the following 438-residue polypeptide: Aspartate--tRNA(Asp/Asn) ligase (438 aa).

Residue Glu-176 participates in L-aspartate binding. The tract at residues 198–201 (QLYK) is aspartate. Arg-220 contacts L-aspartate. ATP contacts are provided by residues 220-222 (RAE), 228-230 (RHL), and Glu-361. Mg(2+) contacts are provided by Glu-361 and Ser-364. Residues Ser-364 and Arg-368 each coordinate L-aspartate. 409–412 (GADR) provides a ligand contact to ATP.

This sequence belongs to the class-II aminoacyl-tRNA synthetase family. Type 2 subfamily. As to quaternary structure, homodimer. The cofactor is Mg(2+).

The protein resides in the cytoplasm. The catalysed reaction is tRNA(Asx) + L-aspartate + ATP = L-aspartyl-tRNA(Asx) + AMP + diphosphate. Its function is as follows. Aspartyl-tRNA synthetase with relaxed tRNA specificity since it is able to aspartylate not only its cognate tRNA(Asp) but also tRNA(Asn). Reaction proceeds in two steps: L-aspartate is first activated by ATP to form Asp-AMP and then transferred to the acceptor end of tRNA(Asp/Asn). This Methanococcus maripaludis (strain C7 / ATCC BAA-1331) protein is Aspartate--tRNA(Asp/Asn) ligase.